Reading from the N-terminus, the 588-residue chain is Protein disulfide-isomerase-like protein of the testis (588 aa).

The first 20 residues, Met1 to Gly20, serve as a signal peptide directing secretion. N-linked (GlcNAc...) asparagine glycosylation is found at Asn55, Asn157, and Asn337. Positions Pro385–Asp448 constitute a Thioredoxin domain. 3 stretches are compositionally biased toward basic and acidic residues: residues Ile531 to Lys542, Ser549 to Ala567, and Glu574 to Leu588. The interval Ile531–Leu588 is disordered. The short motif at Lys585 to Leu588 is the Prevents secretion from ER element.

The protein belongs to the protein disulfide isomerase family. As to quaternary structure, homodimer. The homodimer is not disulfide-linked. Interacts with CLGN and ERO1A. In terms of processing, N-glycosylated. Testis-specific (at protein level).

The protein resides in the endoplasmic reticulum. Its function is as follows. Probable redox-inactive chaperone involved in spermatogenesis. The sequence is that of Protein disulfide-isomerase-like protein of the testis (Pdilt) from Mus musculus (Mouse).